Here is a 447-residue protein sequence, read N- to C-terminus: MTTILKHLPVGQRIGIAFSGGLDTSAALLWMRKKGAVPYAYTANLGQPDEDDYDAIPRRAKEYGAEGARLIDCRKQLVAEGIAAIQCGAFHNTTGGLTYFNTTPLGRAVTGTMLVAAMKEDGVNIWGDGSTYKGNDIERFYRYGLLTNAELQIYKPWLDSDFIDELGGRHEMSEFMIACGFDYKMSVEKAYSTDSNMLGATHEAKDLEFLNSSVKIVNPIMGVKFWDENVKIPAEEVTVLFEQGHPVALNGKTFADDVEMMLEANRIGGRHGLGMSDQIENRIIEAKSRGIYEAPGMALLHIAYERLLTGIHNEDTIEQYHAHGRQLGRLLYQGRWFDSQALMLRDSLQRWVASQITGEVTLELRRGNDYSILNTVSDNLTYKAERLTMEKGDSMFTAEDRIGQLTMRNLDITDTREKLFGYAQSGLLSASSATGLPQVENLENKGK.

ATP is bound by residues 17-25 and alanine 43; that span reads AFSGGLDTS. Tyrosine 99 lines the L-citrulline pocket. The ATP site is built by glycine 129 and threonine 131. L-aspartate contacts are provided by threonine 131, asparagine 135, and aspartate 136. An L-citrulline-binding site is contributed by asparagine 135. Residue aspartate 136 coordinates ATP. Residues arginine 139 and serine 192 each contribute to the L-citrulline site. ATP is bound at residue aspartate 194. L-citrulline-binding residues include threonine 201, glutamate 203, and glutamate 280.

Belongs to the argininosuccinate synthase family. Type 2 subfamily. Homotetramer.

It is found in the cytoplasm. It carries out the reaction L-citrulline + L-aspartate + ATP = 2-(N(omega)-L-arginino)succinate + AMP + diphosphate + H(+). It functions in the pathway amino-acid biosynthesis; L-arginine biosynthesis; L-arginine from L-ornithine and carbamoyl phosphate: step 2/3. The sequence is that of Argininosuccinate synthase from Klebsiella pneumoniae (strain 342).